A 102-amino-acid polypeptide reads, in one-letter code: Large ribosomal subunit protein eL21 (102 aa).

Residues 1-21 (MVRRSKGFRSRTRKKLRKKPR) show a composition bias toward basic residues. The segment at 1-33 (MVRRSKGFRSRTRKKLRKKPRERGLSPLGPMTQ) is disordered.

Belongs to the eukaryotic ribosomal protein eL21 family.

This Methanopyrus kandleri (strain AV19 / DSM 6324 / JCM 9639 / NBRC 100938) protein is Large ribosomal subunit protein eL21.